A 101-amino-acid polypeptide reads, in one-letter code: STAS-domain containing protein PA14_20770 (101 aa).

Residues Leu-14–Ser-101 form the STAS domain.

In terms of processing, phosphorylated on a serine residue, possibly on Ser-56.

It localises to the secreted. This chain is STAS-domain containing protein PA14_20770, found in Pseudomonas aeruginosa (strain UCBPP-PA14).